The primary structure comprises 557 residues: MEILQIAIILIVFVLLCIPIGRYMYKVSEHKKTLLDPVLDKIDGFIYKLSGIQKEEEMNWKQYIFALLMCNAVPAIIGYIILRIQAVGIFNPNHVKGMEQGLTFNTIISFLTNTNLQDYAGETGASYLSQMIVITFFMFFAAATGIAVALAFIRALSGKKKLGNFYVDLVRITTRILLPLSIIVAIFYIGQGVPQTLSANKTVTTIEGKLQNIPLGPVASLEAIKLIGTNGGGFFSANSSHPFENPTPLTNSVQIITLLLLAGSMVVCFGHMIKKKKQAVAIFAAMMVLLLAGAAICFSAEKAGNPALSRIGLSQSMGNLEGKEERFGIAGSSLFTTVTTDTSCGAVNNMHDSLTPIGGAVPLINMMLNVIFGGVGVGFMNMIMYAILTVFLCGLMVGRTPEFLNKKIEGKEIKLVAFAIIVHPFLILMSSALALTTKQGLAGISNPGFHGLTQVLYQFTSSAANNGSGFEGLIDNTMFWNVSAGVVMFLGRYLSIIILLAVASSFAAKRAVPATQGTFKTDNTIFTVTLIVIIVIIGALTFLPAVALGPISEYLTL.

A run of 10 helical transmembrane segments spans residues 1 to 21, 62 to 82, 132 to 152, 176 to 196, 253 to 273, 279 to 299, 371 to 391, 415 to 435, 482 to 502, and 528 to 548; these read MEIL…IPIG, QYIF…YIIL, IVIT…ALAF, ILLP…VPQT, VQII…GHMI, AVAI…ICFS, IFGG…LTVF, LVAF…ALAL, VSAG…LLAV, and VTLI…AVAL.

The protein belongs to the KdpA family. In terms of assembly, the system is composed of three essential subunits: KdpA, KdpB and KdpC.

It localises to the cell membrane. Part of the high-affinity ATP-driven potassium transport (or Kdp) system, which catalyzes the hydrolysis of ATP coupled with the electrogenic transport of potassium into the cytoplasm. This subunit binds the extracellular potassium ions and delivers the ions to the membrane domain of KdpB through an intramembrane tunnel. The sequence is that of Potassium-transporting ATPase potassium-binding subunit from Clostridium acetobutylicum (strain ATCC 824 / DSM 792 / JCM 1419 / IAM 19013 / LMG 5710 / NBRC 13948 / NRRL B-527 / VKM B-1787 / 2291 / W).